The chain runs to 76 residues: Adipogenesis regulatory factor (76 aa).

Expressed in adipose tissue (at protein level). Highly expressed in omental and subcutaneous adipose tissues. Expressed in heart, cornea, liver, kidney and spleen.

It localises to the nucleus. In terms of biological role, plays a role in fat cell development; promotes adipogenic differentiation and stimulates transcription initiation of master adipogenesis factors like PPARG and CEBPA at early stages of preadipocyte differentiation. Its overexpression confers resistance to the anticancer chemotherapeutic drug cisplatin. This chain is Adipogenesis regulatory factor (ADIRF), found in Homo sapiens (Human).